Consider the following 224-residue polypeptide: NADH-quinone oxidoreductase subunit B (224 aa).

[4Fe-4S] cluster-binding residues include C67, C68, C133, and C162. The disordered stretch occupies residues 200–224; it reads DMPAEKDRKRGERIKVTNLRTPDEI. Residues 201 to 224 show a composition bias toward basic and acidic residues; it reads MPAEKDRKRGERIKVTNLRTPDEI.

It belongs to the complex I 20 kDa subunit family. As to quaternary structure, NDH-1 is composed of 14 different subunits. Subunits NuoB, C, D, E, F, and G constitute the peripheral sector of the complex. Requires [4Fe-4S] cluster as cofactor.

The protein localises to the cell inner membrane. It catalyses the reaction a quinone + NADH + 5 H(+)(in) = a quinol + NAD(+) + 4 H(+)(out). NDH-1 shuttles electrons from NADH, via FMN and iron-sulfur (Fe-S) centers, to quinones in the respiratory chain. The immediate electron acceptor for the enzyme in this species is believed to be ubiquinone. Couples the redox reaction to proton translocation (for every two electrons transferred, four hydrogen ions are translocated across the cytoplasmic membrane), and thus conserves the redox energy in a proton gradient. This chain is NADH-quinone oxidoreductase subunit B, found in Aeromonas salmonicida (strain A449).